The sequence spans 254 residues: Cytochrome c oxidase subunit 2 (254 aa).

The Mitochondrial intermembrane portion of the chain corresponds to 12–38 (DAPEPWQICYQDSATKIMSGIDKLTGE). A helical transmembrane segment spans residues 39-59 (IFYYETLLLIIVGWVLISAII). Residues 60–73 (KYTKTELSYKYFNH) are Mitochondrial matrix-facing. A helical membrane pass occupies residues 74–94 (GTLIEILWTCSPAFILIAISF). Residues 95 to 248 (PSFKLLYLMD…KYLEWLNIHL (154 aa)) are Mitochondrial intermembrane-facing. Residues histidine 182, cysteine 217, glutamate 219, cysteine 221, histidine 225, and methionine 228 each contribute to the Cu cation site. Glutamate 219 contributes to the Mg(2+) binding site.

The protein belongs to the cytochrome c oxidase subunit 2 family. In terms of assembly, component of the cytochrome c oxidase (complex IV, CIV), a multisubunit enzyme composed of a catalytic core of 3 subunits and several supernumerary subunits. The complex exists as a monomer or a dimer and forms supercomplexes (SCs) in the inner mitochondrial membrane with ubiquinol-cytochrome c oxidoreductase (cytochrome b-c1 complex, complex III, CIII). Requires Cu cation as cofactor.

Its subcellular location is the mitochondrion inner membrane. The enzyme catalyses 4 Fe(II)-[cytochrome c] + O2 + 8 H(+)(in) = 4 Fe(III)-[cytochrome c] + 2 H2O + 4 H(+)(out). Its function is as follows. Component of the cytochrome c oxidase, the last enzyme in the mitochondrial electron transport chain which drives oxidative phosphorylation. The respiratory chain contains 3 multisubunit complexes succinate dehydrogenase (complex II, CII), ubiquinol-cytochrome c oxidoreductase (cytochrome b-c1 complex, complex III, CIII) and cytochrome c oxidase (complex IV, CIV), that cooperate to transfer electrons derived from NADH and succinate to molecular oxygen, creating an electrochemical gradient over the inner membrane that drives transmembrane transport and the ATP synthase. Cytochrome c oxidase is the component of the respiratory chain that catalyzes the reduction of oxygen to water. Electrons originating from reduced cytochrome c in the intermembrane space (IMS) are transferred via the dinuclear copper A center (CU(A)) of subunit 2 and heme A of subunit 1 to the active site in subunit 1, a binuclear center (BNC) formed by heme A3 and copper B (CU(B)). The BNC reduces molecular oxygen to 2 water molecules using 4 electrons from cytochrome c in the IMS and 4 protons from the mitochondrial matrix. This Zancudomyces culisetae (Gut fungus) protein is Cytochrome c oxidase subunit 2.